The chain runs to 205 residues: Adenylyl-sulfate kinase (205 aa).

An ATP-binding site is contributed by glycine 31–serine 38. Serine 105 (phosphoserine intermediate) is an active-site residue.

The protein belongs to the APS kinase family.

It carries out the reaction adenosine 5'-phosphosulfate + ATP = 3'-phosphoadenylyl sulfate + ADP + H(+). The protein operates within sulfur metabolism; hydrogen sulfide biosynthesis; sulfite from sulfate: step 2/3. Its function is as follows. Catalyzes the synthesis of activated sulfate. The polypeptide is Adenylyl-sulfate kinase (Shewanella sp. (strain ANA-3)).